Reading from the N-terminus, the 420-residue chain is Tol-Pal system protein TolB (420 aa).

The signal sequence occupies residues Met1–Ala21.

The protein belongs to the TolB family. In terms of assembly, the Tol-Pal system is composed of five core proteins: the inner membrane proteins TolA, TolQ and TolR, the periplasmic protein TolB and the outer membrane protein Pal. They form a network linking the inner and outer membranes and the peptidoglycan layer.

The protein localises to the periplasm. Part of the Tol-Pal system, which plays a role in outer membrane invagination during cell division and is important for maintaining outer membrane integrity. The chain is Tol-Pal system protein TolB from Wolbachia sp. subsp. Drosophila simulans (strain wRi).